The sequence spans 543 residues: Formate--tetrahydrofolate ligase (543 aa).

Residue 54–61 (TPAGEGKT) coordinates ATP.

The protein belongs to the formate--tetrahydrofolate ligase family.

The catalysed reaction is (6S)-5,6,7,8-tetrahydrofolate + formate + ATP = (6R)-10-formyltetrahydrofolate + ADP + phosphate. It participates in one-carbon metabolism; tetrahydrofolate interconversion. The chain is Formate--tetrahydrofolate ligase from Thermus thermophilus (strain ATCC BAA-163 / DSM 7039 / HB27).